A 240-amino-acid chain; its full sequence is MSEQDFREIARNGLWRNNPGLVQLLGLCPLLGTSNSTVNALGLGLATMLVLACSNAAVSLVRGAVSEAIRLPAFVMIIAVLTTCIELLMQAWTYELYQVLGIFIPLITTNCVILGRAEAFAAKNGVLRASFDGLLMGLGFALVLLVLGGLRELLGQGTLLADMHLLFGPAAADWKIQPFPQYQGFLLAILPPGAFIMLGLLIALKNRIDESLAERAKVQAGDVPATQRQRQRVRVTGVIE.

5 helical membrane passes run 41–61 (LGLGLATMLVLACSNAAVSLV), 71–91 (LPAFVMIIAVLTTCIELLMQA), 95–115 (ELYQVLGIFIPLITTNCVILG), 130–150 (SFDGLLMGLGFALVLLVLGGL), and 184–204 (GFLLAILPPGAFIMLGLLIAL).

Belongs to the NqrDE/RnfAE family. The complex is composed of six subunits: RnfA, RnfB, RnfC, RnfD, RnfE and RnfG.

Its subcellular location is the cell inner membrane. In terms of biological role, part of a membrane-bound complex that couples electron transfer with translocation of ions across the membrane. This Pseudomonas aeruginosa (strain ATCC 15692 / DSM 22644 / CIP 104116 / JCM 14847 / LMG 12228 / 1C / PRS 101 / PAO1) protein is Ion-translocating oxidoreductase complex subunit E.